Reading from the N-terminus, the 89-residue chain is Putative acyl-CoA-binding protein (89 aa).

The 86-residue stretch at 3–88 (VEEQFKTSAE…VKELVEKNGL (86 aa)) folds into the ACB domain. Residues K15, 30 to 34 (YSLYK), K52, K56, and Y75 each bind an acyl-CoA.

Belongs to the ACBP family.

In terms of biological role, binds medium- and long-chain acyl-CoA esters with very high affinity and may function as an intracellular carrier of acyl-CoA esters. This Hypsibius exemplaris (Freshwater tardigrade) protein is Putative acyl-CoA-binding protein.